The following is a 391-amino-acid chain: Succinyl-diaminopimelate desuccinylase (391 aa).

His67 contributes to the Zn(2+) binding site. The active site involves Asp69. Asp101 lines the Zn(2+) pocket. Residue Glu135 is the Proton acceptor of the active site. 3 residues coordinate Zn(2+): Glu136, Glu164, and His353.

It belongs to the peptidase M20A family. DapE subfamily. As to quaternary structure, homodimer. Requires Zn(2+) as cofactor. The cofactor is Co(2+).

It catalyses the reaction N-succinyl-(2S,6S)-2,6-diaminopimelate + H2O = (2S,6S)-2,6-diaminopimelate + succinate. It functions in the pathway amino-acid biosynthesis; L-lysine biosynthesis via DAP pathway; LL-2,6-diaminopimelate from (S)-tetrahydrodipicolinate (succinylase route): step 3/3. In terms of biological role, catalyzes the hydrolysis of N-succinyl-L,L-diaminopimelic acid (SDAP), forming succinate and LL-2,6-diaminopimelate (DAP), an intermediate involved in the bacterial biosynthesis of lysine and meso-diaminopimelic acid, an essential component of bacterial cell walls. This Rickettsia bellii (strain OSU 85-389) protein is Succinyl-diaminopimelate desuccinylase.